Consider the following 144-residue polypeptide: Nucleoside diphosphate kinase (144 aa).

Residues K5, F53, R81, T87, R98, and N108 each contribute to the ATP site. H111 serves as the catalytic Pros-phosphohistidine intermediate.

Belongs to the NDK family. Mg(2+) serves as cofactor.

The enzyme catalyses a 2'-deoxyribonucleoside 5'-diphosphate + ATP = a 2'-deoxyribonucleoside 5'-triphosphate + ADP. It carries out the reaction a ribonucleoside 5'-diphosphate + ATP = a ribonucleoside 5'-triphosphate + ADP. Major role in the synthesis of nucleoside triphosphates other than ATP. The ATP gamma phosphate is transferred to the NDP beta phosphate via a ping-pong mechanism, using a phosphorylated active-site intermediate. The polypeptide is Nucleoside diphosphate kinase (Solanum lycopersicum (Tomato)).